The sequence spans 246 residues: Probable transcriptional regulatory protein HS_0508 (246 aa).

It belongs to the TACO1 family.

It is found in the cytoplasm. This chain is Probable transcriptional regulatory protein HS_0508, found in Histophilus somni (strain 129Pt) (Haemophilus somnus).